A 184-amino-acid chain; its full sequence is Peptide deformylase 2 (184 aa).

Fe cation contacts are provided by C110 and H153. The active site involves E154. A Fe cation-binding site is contributed by H157.

The protein belongs to the polypeptide deformylase family. Fe(2+) serves as cofactor.

It carries out the reaction N-terminal N-formyl-L-methionyl-[peptide] + H2O = N-terminal L-methionyl-[peptide] + formate. In terms of biological role, removes the formyl group from the N-terminal Met of newly synthesized proteins. Requires at least a dipeptide for an efficient rate of reaction. N-terminal L-methionine is a prerequisite for activity but the enzyme has broad specificity at other positions. In Geobacillus stearothermophilus (Bacillus stearothermophilus), this protein is Peptide deformylase 2.